The sequence spans 166 residues: Lipoprotein signal peptidase (166 aa).

Transmembrane regions (helical) follow at residues G10–T30, L46–A66, W71–L91, and F100–I120. Active-site residues include D126 and D144. A helical membrane pass occupies residues W135–I155.

This sequence belongs to the peptidase A8 family.

Its subcellular location is the cell inner membrane. The enzyme catalyses Release of signal peptides from bacterial membrane prolipoproteins. Hydrolyzes -Xaa-Yaa-Zaa-|-(S,diacylglyceryl)Cys-, in which Xaa is hydrophobic (preferably Leu), and Yaa (Ala or Ser) and Zaa (Gly or Ala) have small, neutral side chains.. It participates in protein modification; lipoprotein biosynthesis (signal peptide cleavage). This protein specifically catalyzes the removal of signal peptides from prolipoproteins. The chain is Lipoprotein signal peptidase from Burkholderia thailandensis (strain ATCC 700388 / DSM 13276 / CCUG 48851 / CIP 106301 / E264).